The primary structure comprises 234 residues: Cytochrome b (234 aa).

4 consecutive transmembrane segments (helical) span residues 33–53, 77–98, 113–133, and 178–198; these read FGSL…FLAM, WLIR…YMHV, WNIG…GYVL, and FFAF…IHLL. Positions 83 and 97 each coordinate heme b. Positions 182 and 196 each coordinate heme b. H201 is an a ubiquinone binding site. A helical transmembrane segment spans residues 226–234; it reads IKDLLGFLV.

This sequence belongs to the cytochrome b family. The cytochrome bc1 complex contains 11 subunits: 3 respiratory subunits (MT-CYB, CYC1 and UQCRFS1), 2 core proteins (UQCRC1 and UQCRC2) and 6 low-molecular weight proteins (UQCRH/QCR6, UQCRB/QCR7, UQCRQ/QCR8, UQCR10/QCR9, UQCR11/QCR10 and a cleavage product of UQCRFS1). This cytochrome bc1 complex then forms a dimer. Heme b is required as a cofactor.

The protein localises to the mitochondrion inner membrane. Component of the ubiquinol-cytochrome c reductase complex (complex III or cytochrome b-c1 complex) that is part of the mitochondrial respiratory chain. The b-c1 complex mediates electron transfer from ubiquinol to cytochrome c. Contributes to the generation of a proton gradient across the mitochondrial membrane that is then used for ATP synthesis. This chain is Cytochrome b (MT-CYB), found in Lepus arcticus (Arctic hare).